Consider the following 84-residue polypeptide: Large ribosomal subunit protein bL27 (84 aa).

The tract at residues 1–22 (MAHKKAGGSTRNGRDSESKRLG) is disordered.

This sequence belongs to the bacterial ribosomal protein bL27 family.

The chain is Large ribosomal subunit protein bL27 from Shewanella woodyi (strain ATCC 51908 / MS32).